The following is a 338-amino-acid chain: Glycerol-3-phosphate dehydrogenase [NAD(P)+] (338 aa).

4 residues coordinate NADPH: S14, Y15, H35, and K109. Residues K109, G138, and T140 each contribute to the sn-glycerol 3-phosphate site. A142 is an NADPH binding site. K194, D247, S257, R258, and N259 together coordinate sn-glycerol 3-phosphate. K194 acts as the Proton acceptor in catalysis. R258 contributes to the NADPH binding site. Residues V282 and E284 each coordinate NADPH.

This sequence belongs to the NAD-dependent glycerol-3-phosphate dehydrogenase family.

Its subcellular location is the cytoplasm. It carries out the reaction sn-glycerol 3-phosphate + NAD(+) = dihydroxyacetone phosphate + NADH + H(+). The catalysed reaction is sn-glycerol 3-phosphate + NADP(+) = dihydroxyacetone phosphate + NADPH + H(+). The protein operates within membrane lipid metabolism; glycerophospholipid metabolism. Its function is as follows. Catalyzes the reduction of the glycolytic intermediate dihydroxyacetone phosphate (DHAP) to sn-glycerol 3-phosphate (G3P), the key precursor for phospholipid synthesis. The protein is Glycerol-3-phosphate dehydrogenase [NAD(P)+] of Shewanella putrefaciens (strain CN-32 / ATCC BAA-453).